We begin with the raw amino-acid sequence, 435 residues long: Gamma-glutamyl phosphate reductase (435 aa).

This sequence belongs to the gamma-glutamyl phosphate reductase family.

It is found in the cytoplasm. It carries out the reaction L-glutamate 5-semialdehyde + phosphate + NADP(+) = L-glutamyl 5-phosphate + NADPH + H(+). Its pathway is amino-acid biosynthesis; L-proline biosynthesis; L-glutamate 5-semialdehyde from L-glutamate: step 2/2. Its function is as follows. Catalyzes the NADPH-dependent reduction of L-glutamate 5-phosphate into L-glutamate 5-semialdehyde and phosphate. The product spontaneously undergoes cyclization to form 1-pyrroline-5-carboxylate. This Bradyrhizobium diazoefficiens (strain JCM 10833 / BCRC 13528 / IAM 13628 / NBRC 14792 / USDA 110) protein is Gamma-glutamyl phosphate reductase.